The chain runs to 226 residues: Ribonuclease 3 (226 aa).

The region spanning 6 to 128 (INRLQRKLGY…LIGGVFLDSN (123 aa)) is the RNase III domain. Glu-41 contacts Mg(2+). Asp-45 is an active-site residue. Positions 114 and 117 each coordinate Mg(2+). Glu-117 is a catalytic residue. Residues 155–225 (DPKTRLQEYL…AEQALKKLEL (71 aa)) enclose the DRBM domain.

This sequence belongs to the ribonuclease III family. As to quaternary structure, homodimer. Mg(2+) is required as a cofactor.

It localises to the cytoplasm. The enzyme catalyses Endonucleolytic cleavage to 5'-phosphomonoester.. Its function is as follows. Digests double-stranded RNA. Involved in the processing of primary rRNA transcript to yield the immediate precursors to the large and small rRNAs (23S and 16S). Processes some mRNAs, and tRNAs when they are encoded in the rRNA operon. Processes pre-crRNA and tracrRNA of type II CRISPR loci if present in the organism. This is Ribonuclease 3 from Salmonella enteritidis PT4 (strain P125109).